The following is a 367-amino-acid chain: MRLISPALVVSTAIQARHVNSSAPVDSAMTEANPLASAHPPDVGYDGVPAGRVRNPDDPTTEERTPGESFMEAINFKIFKLVQEAQGRILGLPEQPRGDMEWLERYGQDAILHYLETGDKDPSQLEKKYDQLLDELKNAPNLEVEILESIHALFLAYMEEVAKPAVQTTPKLNEQPDKFAWAMINKARRNAKPGIRNPYKSLNIPLVENYIKKYNAFIELRQRELTLLDTFSCAFNHNTVKLAKFLAMVDTFSPKRTFVLAMRIELSEIWIEEKRTIAEVASILGISTITGYAKNRLSAGTFVRFIYQLAKTNEQLGPDIVKDLVKTFGPDRTTELLTRMKTVSPRMFTILKDHMDVRLKETGVTPN.

The signal sequence occupies residues M1–A16. N20 is a glycosylation site (N-linked (GlcNAc...) asparagine). Residues N33 to T65 are disordered. The segment covering R54–T65 has biased composition (basic and acidic residues). The short motif at T61–R64 is the dEER element.

It belongs to the RxLR effector family.

The protein resides in the secreted. It is found in the host cell. Secreted effector that acts as an elicitor of hypersensitive response (HR) specifically on plants carrying defense protein RPP5. The chain is Avirulence protein ATR5 from Hyaloperonospora arabidopsidis (strain Emoy2) (Downy mildew agent).